Here is a 1251-residue protein sequence, read N- to C-terminus: Phospholipid-transporting ATPase IC (1251 aa).

The disordered stretch occupies residues 1 to 52; sequence MSTERDSETTFDEESQPNDEVVPYSDDETEDELEDQGSTVEPEQNRVNREAE. Residues 1 to 121 lie on the Cytoplasmic side of the membrane; the sequence is MSTERDSETT…LFEQFKRAAN (121 aa). Positions 25–35 are enriched in acidic residues; that stretch reads SDDETEDELED. Residues 43–52 show a composition bias toward basic and acidic residues; the sequence is EQNRVNREAE. Residues 122–142 traverse the membrane as a helical segment; that stretch reads FYFLILLILQAIPQISTLAWY. Topologically, residues 143–144 are exoplasmic loop; the sequence is TT. A helical membrane pass occupies residues 145-165; that stretch reads LVPLLLVLGITAIKDLVDDVA. Residues 166 to 339 lie on the Cytoplasmic side of the membrane; the sequence is RHKMDKEINN…RTKIDYLMNY (174 aa). A helical membrane pass occupies residues 340–360; the sequence is MVYTIFIVLILVSAGLAIGHA. Topologically, residues 361-385 are exoplasmic loop; the sequence is YWEAQVGNYSWYLYDGENATPSYRG. The helical transmembrane segment at 386–406 threads the bilayer; that stretch reads FLNFWGYIIVLNTMVPISLYV. Residues 407 to 952 lie on the Cytoplasmic side of the membrane; the sequence is SVEVIRLGQS…SYIRMCKFLR (546 aa). Asp-454 serves as the catalytic 4-aspartylphosphate intermediate. Residues Asp-454, Lys-455, Thr-456, Glu-555, Phe-596, Lys-619, Arg-652, Thr-732, Gly-733, Asp-734, Arg-867, and Lys-873 each contribute to the ATP site. Residue Asp-454 coordinates Mg(2+). Residue Thr-456 participates in Mg(2+) binding. Asp-893 is a binding site for Mg(2+). The ATP site is built by Asn-896 and Asp-897. Asp-897 contacts Mg(2+). A helical membrane pass occupies residues 953–973; that stretch reads YFFYKNFAFTLVHFWYSFFNG. Topologically, residues 974 to 982 are exoplasmic loop; it reads YSAQTAYED. A helical membrane pass occupies residues 983 to 1003; it reads WFITLYNVLYSSLPVLLMGLL. The Cytoplasmic portion of the chain corresponds to 1004–1032; it reads DQDVSDKLSLRFPGLYVVGQRDLLFNYKR. Residues 1033–1053 form a helical membrane-spanning segment; the sequence is FFVSLLHGVLTSMVLFFIPLG. At 1054–1071 the chain is on the exoplasmic loop side; that stretch reads AYLQTVGQDGEAPSDYQS. A helical transmembrane segment spans residues 1072–1092; the sequence is FAVTVASALVITVNFQIGLDT. At 1093–1094 the chain is on the cytoplasmic side; it reads SY. A helical membrane pass occupies residues 1095-1115; that stretch reads WTFVNAFSIFGSIALYFGIMF. The Exoplasmic loop segment spans residues 1116–1142; sequence DFHSAGIHVLFPSAFQFTGTASNALRQ. A helical transmembrane segment spans residues 1143–1163; the sequence is PYIWLTIILTVAVCLLPVVAI. At 1164–1251 the chain is on the cytoplasmic side; that stretch reads RFLSMTIWPS…TAEYRRTVES (88 aa). Position 1223 is a phosphoserine (Ser-1223).

This sequence belongs to the cation transport ATPase (P-type) (TC 3.A.3) family. Type IV subfamily. As to quaternary structure, component of a P4-ATPase flippase complex which consists of a catalytic alpha subunit ATP8B1 and an accessory beta subunit TMEM30A. The flippase ATP8B1:TMEM30A complex can form an intermediate phosphoenzyme in vitro. Also interacts with beta subunit TMEM30B. Requires Mg(2+) as cofactor. Hepatocytes, bile duct, intestinal epithelial cells (cholangiocytes and ileocytes), and pancreatic acinar cells.

It is found in the cell membrane. The protein localises to the apical cell membrane. The protein resides in the cell projection. Its subcellular location is the stereocilium. It localises to the endoplasmic reticulum. It is found in the golgi apparatus. The catalysed reaction is ATP + H2O + phospholipidSide 1 = ADP + phosphate + phospholipidSide 2.. The enzyme catalyses a 1,2-diacyl-sn-glycero-3-phosphocholine(out) + ATP + H2O = a 1,2-diacyl-sn-glycero-3-phosphocholine(in) + ADP + phosphate + H(+). It carries out the reaction a 1,2-diacyl-sn-glycero-3-phospho-L-serine(out) + ATP + H2O = a 1,2-diacyl-sn-glycero-3-phospho-L-serine(in) + ADP + phosphate + H(+). Functionally, catalytic component of a P4-ATPase flippase complex which catalyzes the hydrolysis of ATP coupled to the transport of phospholipids, in particular phosphatidylcholines (PC), from the outer to the inner leaflet of the plasma membrane. May participate in the establishment of the canalicular membrane integrity by ensuring asymmetric distribution of phospholipids in the canicular membrane. Thus may have a role in the regulation of bile acids transport into the canaliculus, uptake of bile acids from intestinal contents into intestinal mucosa or both and protect hepatocytes from bile salts. Involved in the microvillus formation in polarized epithelial cells; the function seems to be independent from its flippase activity. Participates in correct apical membrane localization of CDC42, CFTR and SLC10A2. Enables CDC42 clustering at the apical membrane during enterocyte polarization through the interaction between CDC42 polybasic region and negatively charged membrane lipids provided by ATP8B1. Together with TMEM30A is involved in uptake of the synthetic drug alkylphospholipid perifosine. Required for the preservation of cochlear hair cells in the inner ear. According PubMed:20852622 is proposed to act as cardiolipin transporter during inflammatory injury; the function is questioned by PubMed:21475228. This chain is Phospholipid-transporting ATPase IC, found in Mus musculus (Mouse).